Here is a 420-residue protein sequence, read N- to C-terminus: Proteinase-activated receptor 1 (420 aa).

A signal peptide spans 1-20 (MMELRVLLLLLLLTLLGAMG). Residues 21–42 (SLCLANSDTQAKGAHSNNMTIK) constitute a propeptide, removed for receptor activation. A glycan (N-linked (GlcNAc...) asparagine) is linked at Asn-38. Topologically, residues 43 to 101 (TFRIFDDSESEFEEIPWDELDESGEGSGDQAPVSRSARKPIRRNITKEAEQYLSSQWLT) are extracellular. The disordered stretch occupies residues 61–80 (ELDESGEGSGDQAPVSRSAR). N-linked (GlcNAc...) asparagine glycosylation occurs at Asn-86. A helical transmembrane segment spans residues 102 to 127 (KFVPSLYTVVFIVGLPLNLLAIIIFL). Residues 128–136 (FKMKVRKPA) lie on the Cytoplasmic side of the membrane. The helical transmembrane segment at 137–156 (VVYMLNLAIADVFFVSVLPF) threads the bilayer. The Extracellular portion of the chain corresponds to 157 to 175 (KIAYHLSGNDWLFGPGMCR). The cysteines at positions 174 and 253 are disulfide-linked. Residues 176–197 (IVTAIFYCNMYCSVLLIASISV) form a helical membrane-spanning segment. Residues 198–217 (DRFLAVVYPMHSLSWRTMSR) lie on the Cytoplasmic side of the membrane. The helical transmembrane segment at 218 to 238 (AYMACSFIWLISIASTIPLLV) threads the bilayer. At 239–267 (TEQTQKIPRLDITTCHDVLDLKDLKDFYI) the chain is on the extracellular side. The helical transmembrane segment at 268–287 (YYFSSFCLLFFFVPFIITTI) threads the bilayer. Residues 288 to 310 (CYIGIIRSLSSSSIENSCKKTRA) lie on the Cytoplasmic side of the membrane. The helical transmembrane segment at 311-333 (LFLAVVVLCVFIICFGPTNVLFL) threads the bilayer. The Extracellular segment spans residues 334–345 (THYLQEANEFLY). Residues 346–369 (FAYILSACVGSVSCCLDPLIYYYA) form a helical membrane-spanning segment. The Cytoplasmic segment spans residues 370-420 (SSQCQRYLYSLLCCRKVSEPGSSTGQLMSTAMKNDNCSTNAKSSIYKKLLA).

The protein belongs to the G-protein coupled receptor 1 family. In terms of processing, proteolytic cleavage generates a new N-terminus that functions as a tethered ligand.

Its subcellular location is the cell membrane. In terms of biological role, high affinity receptor that binds the activated thrombin, leading to calcium release from intracellular stores. The thrombin-activated receptor signaling pathway is mediated through PTX-insensitive G proteins, activation of phospholipase C resulting in the production of 1D-myo-inositol 1,4,5-trisphosphate (InsP3) which binds to InsP3 receptors causing calcium release from the stores. The sequence is that of Proteinase-activated receptor 1 from Xenopus laevis (African clawed frog).